The chain runs to 462 residues: Adenylosuccinate lyase (462 aa).

N(6)-(1,2-dicarboxyethyl)-AMP contacts are provided by residues 21–22, 87–89, and 114–115; these read RY, KHD, and TS. The active-site Proton donor/acceptor is His-162. Gln-236 lines the N(6)-(1,2-dicarboxyethyl)-AMP pocket. The active-site Proton donor/acceptor is the Ser-287. Residues Ser-288, 293–295, and 332–336 contribute to the N(6)-(1,2-dicarboxyethyl)-AMP site; these read KRN and SAERC.

Belongs to the lyase 1 family. Adenylosuccinate lyase subfamily. As to quaternary structure, homotetramer. Residues from neighboring subunits contribute catalytic and substrate-binding residues to each active site.

The enzyme catalyses N(6)-(1,2-dicarboxyethyl)-AMP = fumarate + AMP. It carries out the reaction (2S)-2-[5-amino-1-(5-phospho-beta-D-ribosyl)imidazole-4-carboxamido]succinate = 5-amino-1-(5-phospho-beta-D-ribosyl)imidazole-4-carboxamide + fumarate. The protein operates within purine metabolism; AMP biosynthesis via de novo pathway; AMP from IMP: step 2/2. It participates in purine metabolism; IMP biosynthesis via de novo pathway; 5-amino-1-(5-phospho-D-ribosyl)imidazole-4-carboxamide from 5-amino-1-(5-phospho-D-ribosyl)imidazole-4-carboxylate: step 2/2. Functionally, catalyzes two reactions in de novo purine nucleotide biosynthesis. Catalyzes the breakdown of 5-aminoimidazole- (N-succinylocarboxamide) ribotide (SAICAR or 2-[5-amino-1-(5-phospho-beta-D-ribosyl)imidazole-4-carboxamido]succinate) to 5-aminoimidazole-4-carboxamide ribotide (AICAR or 5-amino-1-(5-phospho-beta-D-ribosyl)imidazole-4-carboxamide) and fumarate, and of adenylosuccinate (ADS or N(6)-(1,2-dicarboxyethyl)-AMP) to adenosine monophosphate (AMP) and fumarate. This Methanocaldococcus jannaschii (strain ATCC 43067 / DSM 2661 / JAL-1 / JCM 10045 / NBRC 100440) (Methanococcus jannaschii) protein is Adenylosuccinate lyase (purB).